Here is a 138-residue protein sequence, read N- to C-terminus: Large ribosomal subunit protein bL19 (138 aa).

This sequence belongs to the bacterial ribosomal protein bL19 family.

In terms of biological role, this protein is located at the 30S-50S ribosomal subunit interface and may play a role in the structure and function of the aminoacyl-tRNA binding site. The polypeptide is Large ribosomal subunit protein bL19 (Rickettsia akari (strain Hartford)).